The primary structure comprises 942 residues: tRNAse Z TRZ4, mitochondrial (942 aa).

The N-terminal 50 residues, 1–50 (MLTSSMPQNLSLFGFSPLKSSSFALILRPFSLYPPIFASSSPAPSRRPPR), are a transit peptide targeting the mitochondrion. The segment at 38 to 85 (ASSSPAPSRRPPRTAGYRRSGPSPPRRKWSSFEEQKRKGRSPMEKDKA) is disordered. A compositionally biased stretch (basic and acidic residues) spans 67–85 (SSFEEQKRKGRSPMEKDKA).

It belongs to the RNase Z family. Homodimer. It depends on Zn(2+) as a cofactor. Ca(2+) is required as a cofactor. The cofactor is Mn(2+). Mg(2+) serves as cofactor.

It localises to the mitochondrion. It carries out the reaction Endonucleolytic cleavage of RNA, removing extra 3' nucleotides from tRNA precursor, generating 3' termini of tRNAs. A 3'-hydroxy group is left at the tRNA terminus and a 5'-phosphoryl group is left at the trailer molecule.. Its function is as follows. Zinc phosphodiesterase, which displays tRNA 3'-processing endonuclease activity. Involved in tRNA maturation, by removing a 3'-trailer from precursor tRNA. Can process the mitochondrial tRNA-like structures (t-elements). This chain is tRNAse Z TRZ4, mitochondrial, found in Arabidopsis thaliana (Mouse-ear cress).